Here is a 267-residue protein sequence, read N- to C-terminus: Phosphatidylserine decarboxylase proenzyme (267 aa).

Residues Asp-78, His-132, and Ser-236 each act as charge relay system; for autoendoproteolytic cleavage activity in the active site. The Schiff-base intermediate with substrate; via pyruvic acid; for decarboxylase activity role is filled by Ser-236. Ser-236 bears the Pyruvic acid (Ser); by autocatalysis mark.

It belongs to the phosphatidylserine decarboxylase family. PSD-B subfamily. Prokaryotic type I sub-subfamily. As to quaternary structure, heterodimer of a large membrane-associated beta subunit and a small pyruvoyl-containing alpha subunit. The cofactor is pyruvate. In terms of processing, is synthesized initially as an inactive proenzyme. Formation of the active enzyme involves a self-maturation process in which the active site pyruvoyl group is generated from an internal serine residue via an autocatalytic post-translational modification. Two non-identical subunits are generated from the proenzyme in this reaction, and the pyruvate is formed at the N-terminus of the alpha chain, which is derived from the carboxyl end of the proenzyme. The autoendoproteolytic cleavage occurs by a canonical serine protease mechanism, in which the side chain hydroxyl group of the serine supplies its oxygen atom to form the C-terminus of the beta chain, while the remainder of the serine residue undergoes an oxidative deamination to produce ammonia and the pyruvoyl prosthetic group on the alpha chain. During this reaction, the Ser that is part of the protease active site of the proenzyme becomes the pyruvoyl prosthetic group, which constitutes an essential element of the active site of the mature decarboxylase.

It localises to the cell membrane. It catalyses the reaction a 1,2-diacyl-sn-glycero-3-phospho-L-serine + H(+) = a 1,2-diacyl-sn-glycero-3-phosphoethanolamine + CO2. It functions in the pathway phospholipid metabolism; phosphatidylethanolamine biosynthesis; phosphatidylethanolamine from CDP-diacylglycerol: step 2/2. In terms of biological role, catalyzes the formation of phosphatidylethanolamine (PtdEtn) from phosphatidylserine (PtdSer). The protein is Phosphatidylserine decarboxylase proenzyme of Helicobacter pylori (strain ATCC 700392 / 26695) (Campylobacter pylori).